The following is a 27-amino-acid chain: Nucleoside diphosphate kinase 2 (27 aa).

K3 lines the ATP pocket.

It belongs to the NDK family. Mg(2+) is required as a cofactor.

The enzyme catalyses a 2'-deoxyribonucleoside 5'-diphosphate + ATP = a 2'-deoxyribonucleoside 5'-triphosphate + ADP. It carries out the reaction a ribonucleoside 5'-diphosphate + ATP = a ribonucleoside 5'-triphosphate + ADP. In terms of biological role, major role in the synthesis of nucleoside triphosphates other than ATP. The ATP gamma phosphate is transferred to the NDP beta phosphate via a ping-pong mechanism, using a phosphorylated active-site intermediate. This chain is Nucleoside diphosphate kinase 2, found in Pseudotsuga menziesii (Douglas-fir).